Here is a 337-residue protein sequence, read N- to C-terminus: Anthranilate phosphoribosyltransferase (337 aa).

Residues glycine 79, 82–83 (GD), threonine 87, 89–92 (NVST), 107–115 (KHGNRSVSS), and serine 119 each bind 5-phospho-alpha-D-ribose 1-diphosphate. Glycine 79 is a binding site for anthranilate. Mg(2+) is bound at residue serine 91. Asparagine 110 lines the anthranilate pocket. Arginine 165 contacts anthranilate. The Mg(2+) site is built by aspartate 223 and glutamate 224.

Belongs to the anthranilate phosphoribosyltransferase family. In terms of assembly, homodimer. Mg(2+) serves as cofactor.

The catalysed reaction is N-(5-phospho-beta-D-ribosyl)anthranilate + diphosphate = 5-phospho-alpha-D-ribose 1-diphosphate + anthranilate. Its pathway is amino-acid biosynthesis; L-tryptophan biosynthesis; L-tryptophan from chorismate: step 2/5. Its function is as follows. Catalyzes the transfer of the phosphoribosyl group of 5-phosphorylribose-1-pyrophosphate (PRPP) to anthranilate to yield N-(5'-phosphoribosyl)-anthranilate (PRA). The sequence is that of Anthranilate phosphoribosyltransferase from Aeromonas salmonicida (strain A449).